Reading from the N-terminus, the 320-residue chain is N-acetylneuraminate lyase (320 aa).

Residues Thr-51 and Thr-52 each coordinate aceneuramate. Residue Tyr-143 is the Proton donor of the active site. Catalysis depends on Lys-173, which acts as the Schiff-base intermediate with substrate. Aceneuramate is bound by residues Ser-175, Gly-199, Asp-201, Glu-202, and Ser-218.

The protein belongs to the DapA family. NanA subfamily. In terms of assembly, homotetramer.

Its subcellular location is the cytoplasm. The enzyme catalyses aceneuramate = aldehydo-N-acetyl-D-mannosamine + pyruvate. It functions in the pathway amino-sugar metabolism; N-acetylneuraminate degradation. Catalyzes the cleavage of N-acetylneuraminic acid (sialic acid) to form pyruvate and N-acetylmannosamine via a Schiff base intermediate. It prevents sialic acids from being recycled and returning to the cell surface. Involved in the N-glycolylneuraminic acid (Neu5Gc) degradation pathway. The sequence is that of N-acetylneuraminate lyase from Rattus norvegicus (Rat).